The following is a 203-amino-acid chain: Mpv17-like protein (203 aa).

The Cytoplasmic segment spans residues 1 to 12 (MRILIQFTKRHP). Residues 13–30 (WLTNVTIYGSLFASADIV) form a helical membrane-spanning segment. Topologically, residues 31–49 (QQKLSKSPTEPIDFKQTAK) are lumenal. The helical transmembrane segment at 50–69 (VGLVGFCFHANFNFFWLRFI) threads the bilayer. Topologically, residues 70-89 (ERTFPGSAPLNVIRKVACDQ) are cytoplasmic. The chain crosses the membrane as a helical span at residues 90-107 (LMAAPITISAFYTGLSLL). At 108-143 (DGERDVFKNLKEKFWPTYKTGVMCWTVFQTINFSVI) the chain is on the lumenal side. The helical transmembrane segment at 144–166 (PPFVRTAYIGVCAFLWTTFLCYI) threads the bilayer. Over 167-203 (RNRDINEVTTRLLHAVPNIRGKMAFPQDQDDNKPADK) the chain is Cytoplasmic.

The protein belongs to the peroxisomal membrane protein PXMP2/4 family.

It is found in the peroxisome membrane. Its function is as follows. Participates in reactive oxygen species metabolism by up- or down-regulation of the genes of antioxidant enzymes. Protective against the mitochondrial apoptotic cascade. This chain is Mpv17-like protein (mpv17l), found in Xenopus laevis (African clawed frog).